A 277-amino-acid polypeptide reads, in one-letter code: Sulfate transport system permease protein CysT (277 aa).

A run of 7 helical transmembrane segments spans residues 17-37 (LGTSLLFVCLILLLPLSALVM), 64-84 (LLSAFVASIFNGVFGLLMAWI), 99-119 (LMDLPFALPTAVAGLTLASLF), 136-156 (VTYTWLGIAVAMAFTSIPFVV), 185-205 (FCKVVLPELSPALVAGVALSF), 215-235 (VIFIAGNIAWKTEVTSLMIFV), and 243-263 (PAASAIASVILAASLLLLFSI). Residues 60–263 (YKVTLLSAFV…AASLLLLFSI (204 aa)) enclose the ABC transmembrane type-1 domain.

Belongs to the binding-protein-dependent transport system permease family. CysTW subfamily. In terms of assembly, the complex is composed of two ATP-binding proteins (CysA), two transmembrane proteins (CysT and CysW) and a solute-binding protein (CysP).

It is found in the cell inner membrane. Functionally, part of the ABC transporter complex CysAWTP (TC 3.A.1.6.1) involved in sulfate/thiosulfate import. Probably responsible for the translocation of the substrate across the membrane. The sequence is that of Sulfate transport system permease protein CysT (cysU) from Escherichia coli (strain K12).